We begin with the raw amino-acid sequence, 282 residues long: Ribosomal RNA small subunit methyltransferase I (282 aa).

It belongs to the methyltransferase superfamily. RsmI family.

The protein resides in the cytoplasm. It carries out the reaction cytidine(1402) in 16S rRNA + S-adenosyl-L-methionine = 2'-O-methylcytidine(1402) in 16S rRNA + S-adenosyl-L-homocysteine + H(+). In terms of biological role, catalyzes the 2'-O-methylation of the ribose of cytidine 1402 (C1402) in 16S rRNA. The protein is Ribosomal RNA small subunit methyltransferase I of Buchnera aphidicola subsp. Acyrthosiphon pisum (strain APS) (Acyrthosiphon pisum symbiotic bacterium).